Here is a 184-residue protein sequence, read N- to C-terminus: ATP synthase subunit delta (184 aa).

It belongs to the ATPase delta chain family. As to quaternary structure, F-type ATPases have 2 components, F(1) - the catalytic core - and F(0) - the membrane proton channel. F(1) has five subunits: alpha(3), beta(3), gamma(1), delta(1), epsilon(1). F(0) has three main subunits: a(1), b(2) and c(10-14). The alpha and beta chains form an alternating ring which encloses part of the gamma chain. F(1) is attached to F(0) by a central stalk formed by the gamma and epsilon chains, while a peripheral stalk is formed by the delta and b chains.

The protein resides in the cell inner membrane. Functionally, f(1)F(0) ATP synthase produces ATP from ADP in the presence of a proton or sodium gradient. F-type ATPases consist of two structural domains, F(1) containing the extramembraneous catalytic core and F(0) containing the membrane proton channel, linked together by a central stalk and a peripheral stalk. During catalysis, ATP synthesis in the catalytic domain of F(1) is coupled via a rotary mechanism of the central stalk subunits to proton translocation. In terms of biological role, this protein is part of the stalk that links CF(0) to CF(1). It either transmits conformational changes from CF(0) to CF(1) or is implicated in proton conduction. The sequence is that of ATP synthase subunit delta from Rickettsia peacockii (strain Rustic).